Consider the following 179-residue polypeptide: Large ribosomal subunit protein uL6 (179 aa).

The protein belongs to the universal ribosomal protein uL6 family. Part of the 50S ribosomal subunit.

Its function is as follows. This protein binds to the 23S rRNA, and is important in its secondary structure. It is located near the subunit interface in the base of the L7/L12 stalk, and near the tRNA binding site of the peptidyltransferase center. This is Large ribosomal subunit protein uL6 from Syntrophobacter fumaroxidans (strain DSM 10017 / MPOB).